The sequence spans 324 residues: UDP-N-acetylenolpyruvoylglucosamine reductase (324 aa).

In terms of domain architecture, FAD-binding PCMH-type spans 36-211; the sequence is FRAGGLAELM…AEDKAKIRND (176 aa). Residue Arg-183 is part of the active site. The active-site Proton donor is Ser-232. The active site involves Glu-302.

Belongs to the MurB family. FAD is required as a cofactor.

The protein localises to the cytoplasm. It catalyses the reaction UDP-N-acetyl-alpha-D-muramate + NADP(+) = UDP-N-acetyl-3-O-(1-carboxyvinyl)-alpha-D-glucosamine + NADPH + H(+). It participates in cell wall biogenesis; peptidoglycan biosynthesis. Its function is as follows. Cell wall formation. This Sinorhizobium medicae (strain WSM419) (Ensifer medicae) protein is UDP-N-acetylenolpyruvoylglucosamine reductase.